The sequence spans 1241 residues: Nephrin (1241 aa).

A signal peptide spans 1 to 22; sequence MALGTTLRASLLLLGLLTEGLA. Topologically, residues 23-1055 are extracellular; that stretch reads QLAIPASVPR…EDQLPTEPPS (1033 aa). 6 Ig-like C2-type domains span residues 27 to 130, 143 to 234, 242 to 333, 340 to 434, 440 to 540, and 544 to 635; these read PASV…VILS, EAGT…SFTV, PPVI…HGIT, PSAI…KSLI, PAQK…TQLA, and PPTN…ETVS. A glycan (N-linked (GlcNAc...) asparagine) is linked at asparagine 40. Disulfide bonds link cysteine 53–cysteine 111, cysteine 160–cysteine 217, and cysteine 265–cysteine 317. Asparagine 356 and asparagine 401 each carry an N-linked (GlcNAc...) asparagine glycan. Cysteines 361 and 417 form a disulfide. Residue serine 432 is modified to Phosphoserine. A disulfide bridge connects residues cysteine 465 and cysteine 528. Asparagine 547, asparagine 553, asparagine 564, asparagine 577, asparagine 680, and asparagine 708 each carry an N-linked (GlcNAc...) asparagine glycan. Cysteine 567 and cysteine 623 are disulfide-bonded. Ig-like C2-type domains are found at residues 740 to 832 and 838 to 939; these read PTIR…LLRL and PQVE…VSIS. 2 cysteine pairs are disulfide-bonded: cysteine 761/cysteine 816 and cysteine 863/cysteine 920. A glycan (N-linked (GlcNAc...) asparagine) is linked at asparagine 908. Residues 943–1038 enclose the Fibronectin type-III domain; it reads PPSGLKVVSL…TQLPITTPGL (96 aa). The segment at 1025-1057 is disordered; sequence ADKGTQLPITTPGLHQPSGEPEDQLPTEPPSGP. A helical membrane pass occupies residues 1056–1076; it reads GPSGLPLLPVLFALGGLLLLS. At 1077 to 1241 the chain is on the cytoplasmic side; it reads NASCVGGVLW…LPFELRGHLV (165 aa). Serine 1098 is modified (phosphoserine). Basic and acidic residues predominate over residues 1099 to 1114; that stretch reads EKTEAGSEEDRVRNEY. A disordered region spans residues 1099 to 1137; sequence EKTEAGSEEDRVRNEYEESQWTGERDTQSSTVSTTEAEP. A Phosphothreonine modification is found at threonine 1101. Serine 1105 is modified (phosphoserine). A binds to NPHS2 region spans residues 1160–1241; it reads RGFTGEDEDM…LPFELRGHLV (82 aa). A Phosphotyrosine; by FYN modification is found at tyrosine 1193.

This sequence belongs to the immunoglobulin superfamily. Interacts with CD2AP (via C-terminal domain). Interacts with MAGI1 (via PDZ 2 and 3 domains) forming a tripartite complex with IGSF5/JAM4. Interacts with DDN; the interaction is direct. Self-associates (via the Ig-like domains). Also interacts (via the Ig-like domains) with KIRREL1/NEPH1 and KIRREL2; the interaction with KIRREL1 is dependent on KIRREL1 glycosylation. Interacts with KIRREL3. Forms a complex with ACTN4, CASK, IQGAP1, MAGI2, SPTAN1 and SPTBN1. Interacts with NPHS2. Interacts with phosphatidylinositol 3-kinase regulatory subunit PIK3R1; the interaction is reduced by high glucose levels. Phosphorylated at Tyr-1193 by FYN, leading to the recruitment and activation of phospholipase C-gamma-1/PLCG1. Tyrosine phosphorylation is reduced by high glucose levels. Dephosphorylated by tensin TNS2 which leads to reduced binding of NPHN1 to PIK3R1. In terms of tissue distribution, specifically expressed in podocytes of kidney glomeruli.

It is found in the cell membrane. Functionally, seems to play a role in the development or function of the kidney glomerular filtration barrier. Regulates glomerular vascular permeability. May anchor the podocyte slit diaphragm to the actin cytoskeleton. Plays a role in skeletal muscle formation through regulation of myoblast fusion. The polypeptide is Nephrin (NPHS1) (Homo sapiens (Human)).